We begin with the raw amino-acid sequence, 500 residues long: L-arabinose isomerase (500 aa).

Mn(2+) is bound by residues glutamate 306, glutamate 333, histidine 350, and histidine 450.

Belongs to the arabinose isomerase family. In terms of assembly, homohexamer. The cofactor is Mn(2+).

It catalyses the reaction beta-L-arabinopyranose = L-ribulose. It participates in carbohydrate degradation; L-arabinose degradation via L-ribulose; D-xylulose 5-phosphate from L-arabinose (bacterial route): step 1/3. Its function is as follows. Catalyzes the conversion of L-arabinose to L-ribulose. This Escherichia coli O7:K1 (strain IAI39 / ExPEC) protein is L-arabinose isomerase.